We begin with the raw amino-acid sequence, 417 residues long: uncharacterized protein (417 aa).

Residues 1–24 are disordered; that stretch reads MSQPPINPLGQPQVPAAASPSGQP. 4 helical membrane passes run 54 to 74, 79 to 99, 117 to 137, and 143 to 163; these read VYDT…LLTA, LMLY…TLLI, AIVV…GAFV, and MLVF…LYFM. The segment covering 211 to 228 has biased composition (basic and acidic residues); the sequence is DLSASARMEEHEASQRQD. Disordered regions lie at residues 211–283 and 308–417; these read DLSA…FKDD and IMPA…RKNK. A compositionally biased stretch (polar residues) spans 312 to 322; sequence SSRSPNFSTGT. The segment covering 336-347 has biased composition (low complexity); sequence EPSIPRVSSSSR. Residues 391-401 are compositionally biased toward polar residues; that stretch reads STANLSPSNPF.

This sequence belongs to the chlamydial CPn_0443/CT_005/TC_0273 family.

The protein resides in the cell membrane. This is an uncharacterized protein from Chlamydia pneumoniae (Chlamydophila pneumoniae).